The sequence spans 292 residues: uncharacterized protein (292 aa).

Helical transmembrane passes span 57 to 77, 101 to 121, 143 to 163, 184 to 204, and 271 to 291; these read IISL…LTLI, VYVF…FNFM, LIYA…AVLI, VVIT…NFVL, and IAFL…DRGI.

Belongs to the CbiQ family.

Its subcellular location is the cell membrane. This is an uncharacterized protein from Methanocaldococcus jannaschii (strain ATCC 43067 / DSM 2661 / JAL-1 / JCM 10045 / NBRC 100440) (Methanococcus jannaschii).